Reading from the N-terminus, the 215-residue chain is Cytochrome b6 (215 aa).

Residues 32-52 (IFYCLGGITLTCFLVQVATGF) traverse the membrane as a helical segment. Cys35 is a binding site for heme c. His86 and His100 together coordinate heme b. The next 3 membrane-spanning stretches (helical) occupy residues 90–110 (ASMM…TGGF), 116–136 (LTWV…VTGY), and 186–206 (LHTF…FPMI). Heme b-binding residues include His187 and His202.

This sequence belongs to the cytochrome b family. PetB subfamily. As to quaternary structure, the 4 large subunits of the cytochrome b6-f complex are cytochrome b6, subunit IV (17 kDa polypeptide, PetD), cytochrome f and the Rieske protein, while the 4 small subunits are PetG, PetL, PetM and PetN. The complex functions as a dimer. It depends on heme b as a cofactor. Heme c serves as cofactor.

The protein localises to the plastid. It localises to the chloroplast thylakoid membrane. Functionally, component of the cytochrome b6-f complex, which mediates electron transfer between photosystem II (PSII) and photosystem I (PSI), cyclic electron flow around PSI, and state transitions. This chain is Cytochrome b6, found in Lactuca sativa (Garden lettuce).